Reading from the N-terminus, the 246-residue chain is tRNA pseudouridine synthase A (246 aa).

Catalysis depends on Asp53, which acts as the Nucleophile. Tyr112 is a substrate binding site.

The protein belongs to the tRNA pseudouridine synthase TruA family. In terms of assembly, homodimer.

The catalysed reaction is uridine(38/39/40) in tRNA = pseudouridine(38/39/40) in tRNA. Functionally, formation of pseudouridine at positions 38, 39 and 40 in the anticodon stem and loop of transfer RNAs. The polypeptide is tRNA pseudouridine synthase A (Anaplasma phagocytophilum (strain HZ)).